The following is a 225-amino-acid chain: Cytidylate kinase (225 aa).

ATP is bound at residue 11–19 (GPAGAGKST).

This sequence belongs to the cytidylate kinase family. Type 1 subfamily.

It localises to the cytoplasm. The enzyme catalyses CMP + ATP = CDP + ADP. It carries out the reaction dCMP + ATP = dCDP + ADP. The chain is Cytidylate kinase from Shouchella clausii (strain KSM-K16) (Alkalihalobacillus clausii).